The following is a 464-amino-acid chain: MLRAGRMDEFVTEEDEPWYDQRDLEQDLHLAAELGKTLLERNKELEDSLQQMYINNEEQVQEIEYLTKQMEMLREMNEQHAKVYEQLDVTARELEITNEKLVLESKGSQQKIDRLTGTMEMLQGQVDTLTARVEELRTLEELRVRREKKERRKTVHSFPCLKELCTAPRYEDSFMVSDPGSGDLEECQPADEENEHLRVMVSSLRAAVAAERGRREAAERECAAVLQEFERLEQRLLGAESCQRRVHELEAELQEMQQLRKSRVCLLSGEEGLEQTLLNCAPETDTPDEAVMAQNGDANDGAAPVRKSCSDTALDAISAVDASGRRKGSYALHANGVRKRGMSILREVDEQYHALLEKYEELLGKCRRHEESLRHAEVQTSRPVSRDPSMKECRVAEPQQPPPTPPQTPSTPEALEGISRQVEAVDKRLSQNTPEYKALFKEIFSRLQRTKSDINSTKGRKGGK.

Coiled coils occupy residues 31-154 (AAEL…RRKT), 201-264 (VSSL…KSRV), and 342-379 (MSIL…AEVQ). Residues 371 to 419 (ESLRHAEVQTSRPVSRDPSMKECRVAEPQQPPPTPPQTPSTPEALEGIS) form a disordered region. Positions 384–395 (VSRDPSMKECRV) are enriched in basic and acidic residues. Positions 399-409 (QQPPPTPPQTP) are enriched in pro residues.

Belongs to the CDR2 family.

The protein is Cerebellar degeneration-related protein 2-like (cdr2l) of Danio rerio (Zebrafish).